The chain runs to 474 residues: Probable glycine dehydrogenase (decarboxylating) subunit 2 (474 aa).

The residue at position 262 (Lys-262) is an N6-(pyridoxal phosphate)lysine.

It belongs to the GcvP family. C-terminal subunit subfamily. As to quaternary structure, the glycine cleavage system is composed of four proteins: P, T, L and H. In this organism, the P 'protein' is a heterodimer of two subunits. It depends on pyridoxal 5'-phosphate as a cofactor.

The catalysed reaction is N(6)-[(R)-lipoyl]-L-lysyl-[glycine-cleavage complex H protein] + glycine + H(+) = N(6)-[(R)-S(8)-aminomethyldihydrolipoyl]-L-lysyl-[glycine-cleavage complex H protein] + CO2. Its function is as follows. The glycine cleavage system catalyzes the degradation of glycine. The P protein binds the alpha-amino group of glycine through its pyridoxal phosphate cofactor; CO(2) is released and the remaining methylamine moiety is then transferred to the lipoamide cofactor of the H protein. In Thermotoga maritima (strain ATCC 43589 / DSM 3109 / JCM 10099 / NBRC 100826 / MSB8), this protein is Probable glycine dehydrogenase (decarboxylating) subunit 2.